The sequence spans 259 residues: Eukaryotic translation initiation factor 3 subunit J (259 aa).

Residues 1–12 (MAAAAAAAAGDS) are compositionally biased toward low complexity. A sufficient for interaction with EIF3B region spans residues 1-70 (MAAAAAAAAG…KEEAEVKPEV (70 aa)). The tract at residues 1 to 111 (MAAAAAAAAG…EPEEPKVLTP (111 aa)) is disordered. A phosphoserine mark is found at Ser-12, Ser-14, and Ser-21. Acidic residues predominate over residues 41–60 (EGEDEDEDVKDNWDDDDDEK). The span at 61 to 107 (KEEAEVKPEVKISEKKKIAEKIKEKERQQKKRQEEIKKRLEEPEEPK) shows a compositional bias: basic and acidic residues. A coiled-coil region spans residues 71-136 (KISEKKKIAE…ESDLELAKET (66 aa)). Residue Lys-107 forms a Glycyl lysine isopeptide (Lys-Gly) (interchain with G-Cter in SUMO2) linkage. Thr-110 is modified (phosphothreonine). Ser-128 bears the Phosphoserine mark. Residues 218-247 (SKAKKKKKGVVPGGGLKATMKDDLADYGGY) form a disordered region. Residues 244 to 259 (YGGYDGGYVQDYEDFM) are promotes stable association with the 40S ribosome. The residue at position 255 (Tyr-255) is a Phosphotyrosine.

This sequence belongs to the eIF-3 subunit J family. Component of the eukaryotic translation initiation factor 3 (eIF-3) complex, which is composed of 13 subunits: EIF3A, EIF3B, EIF3C, EIF3D, EIF3E, EIF3F, EIF3G, EIF3H, EIF3I, EIF3J, EIF3K, EIF3L and EIF3M. The eIF-3 complex appears to include 3 stable modules: module A is composed of EIF3A, EIF3B, EIF3G and EIF3I; module B is composed of EIF3F, EIF3H, and EIF3M; and module C is composed of EIF3C, EIF3D, EIF3E, EIF3K and EIF3L. EIF3C of module C binds EIF3B of module A and EIF3H of module B, thereby linking the three modules. EIF3J is a labile subunit that binds to the eIF-3 complex via EIF3B. The eIF-3 complex interacts with RPS6KB1 under conditions of nutrient depletion. Mitogenic stimulation leads to binding and activation of a complex composed of MTOR and RPTOR, leading to phosphorylation and release of RPS6KB1 and binding of EIF4B to eIF-3. In terms of processing, phosphorylated. Phosphorylation is enhanced upon serum stimulation.

It is found in the cytoplasm. Its function is as follows. Component of the eukaryotic translation initiation factor 3 (eIF-3) complex, which is required for several steps in the initiation of protein synthesis. The eIF-3 complex associates with the 40S ribosome and facilitates the recruitment of eIF-1, eIF-1A, eIF-2:GTP:methionyl-tRNAi and eIF-5 to form the 43S pre-initiation complex (43S PIC). The eIF-3 complex stimulates mRNA recruitment to the 43S PIC and scanning of the mRNA for AUG recognition. The eIF-3 complex is also required for disassembly and recycling of post-termination ribosomal complexes and subsequently prevents premature joining of the 40S and 60S ribosomal subunits prior to initiation. The eIF-3 complex specifically targets and initiates translation of a subset of mRNAs involved in cell proliferation, including cell cycling, differentiation and apoptosis, and uses different modes of RNA stem-loop binding to exert either translational activation or repression. This subunit binds directly within the mRNA entry channel of the 40S ribosome to the aminoacyl (A) site. It may regulate the interaction between the 43S PIC and mRNA. The protein is Eukaryotic translation initiation factor 3 subunit J of Pongo abelii (Sumatran orangutan).